The primary structure comprises 268 residues: Tryptophan synthase alpha chain (268 aa).

Active-site proton acceptor residues include Glu49 and Asp60.

It belongs to the TrpA family. Tetramer of two alpha and two beta chains.

It carries out the reaction (1S,2R)-1-C-(indol-3-yl)glycerol 3-phosphate + L-serine = D-glyceraldehyde 3-phosphate + L-tryptophan + H2O. Its pathway is amino-acid biosynthesis; L-tryptophan biosynthesis; L-tryptophan from chorismate: step 5/5. Functionally, the alpha subunit is responsible for the aldol cleavage of indoleglycerol phosphate to indole and glyceraldehyde 3-phosphate. This is Tryptophan synthase alpha chain from Haemophilus influenzae (strain PittEE).